Here is a 129-residue protein sequence, read N- to C-terminus: Glycine cleavage system H protein (129 aa).

Residues 24-106 form the Lipoyl-binding domain; that stretch reads LVRVGLSAYA…HGEGWLLVIR (83 aa). K65 carries the N6-lipoyllysine modification.

Belongs to the GcvH family. As to quaternary structure, the glycine cleavage system is composed of four proteins: P, T, L and H. (R)-lipoate is required as a cofactor.

In terms of biological role, the glycine cleavage system catalyzes the degradation of glycine. The H protein shuttles the methylamine group of glycine from the P protein to the T protein. The protein is Glycine cleavage system H protein of Synechococcus sp. (strain CC9311).